Here is a 338-residue protein sequence, read N- to C-terminus: 1-aminocyclopropane-1-carboxylate deaminase (338 aa).

The residue at position 51 (Lys51) is an N6-(pyridoxal phosphate)lysine. Catalysis depends on Ser78, which acts as the Nucleophile.

Belongs to the ACC deaminase/D-cysteine desulfhydrase family. Homotrimer. It depends on pyridoxal 5'-phosphate as a cofactor.

It carries out the reaction 1-aminocyclopropane-1-carboxylate + H2O = 2-oxobutanoate + NH4(+). Catalyzes a cyclopropane ring-opening reaction, the irreversible conversion of 1-aminocyclopropane-1-carboxylate (ACC) to ammonia and alpha-ketobutyrate. Allows growth on ACC as a nitrogen source. The sequence is that of 1-aminocyclopropane-1-carboxylate deaminase from Variovorax paradoxus.